Consider the following 120-residue polypeptide: Proteinase inhibitor (120 aa).

A signal peptide spans 1 to 19; it reads MKQLIIATLLSALSGGCMA. A disulfide bond links cysteine 43 and cysteine 65.

The protein belongs to the protease inhibitor I38 family. In terms of assembly, monomer.

The protein localises to the periplasm. Inhibitor of the extracellular proteases A, B, and C of E.chrysanthemi and the S.marcescens 50 kDa extracellular protease. It forms a non-covalent bond with the proteases and may prevent autocatalytic cleavage of the proteases zymogen in the periplasm. This chain is Proteinase inhibitor (inh), found in Dickeya chrysanthemi (Pectobacterium chrysanthemi).